The primary structure comprises 328 residues: Serine/threonine-protein phosphatase PP2A-2 catalytic subunit (328 aa).

4 residues coordinate Mn(2+): D76, H78, D104, and N136. The active-site Proton donor is the H137. 2 residues coordinate Mn(2+): H186 and H260. A Leucine methyl ester modification is found at L328.

It belongs to the PPP phosphatase family. PP-2A subfamily. Requires Mn(2+) as cofactor.

The enzyme catalyses O-phospho-L-seryl-[protein] + H2O = L-seryl-[protein] + phosphate. The catalysed reaction is O-phospho-L-threonyl-[protein] + H2O = L-threonyl-[protein] + phosphate. This is Serine/threonine-protein phosphatase PP2A-2 catalytic subunit (PP2A-2) from Blumeria hordei (Barley powdery mildew).